The sequence spans 408 residues: S-adenosylmethionine synthase (408 aa).

140–145 is a binding site for ATP; the sequence is GQGSVD.

The protein belongs to the AdoMet synthase 2 family. Mg(2+) is required as a cofactor.

The enzyme catalyses L-methionine + ATP + H2O = S-adenosyl-L-methionine + phosphate + diphosphate. Its pathway is amino-acid biosynthesis; S-adenosyl-L-methionine biosynthesis; S-adenosyl-L-methionine from L-methionine: step 1/1. In terms of biological role, catalyzes the formation of S-adenosylmethionine from methionine and ATP. The polypeptide is S-adenosylmethionine synthase (Caldivirga maquilingensis (strain ATCC 700844 / DSM 13496 / JCM 10307 / IC-167)).